Here is a 117-residue protein sequence, read N- to C-terminus: MAWAPLLLTLLAHCTGSWANFMLTQPHSVSESPGKTVTISCTGSSGSIASNYVQWYQQRPGSAPTTVIYEDNQRPSGVPDRFSGSIDSSSNSASLTISGLKTEDEADYYCQSYDSSN.

The N-terminal stretch at 1 to 19 is a signal peptide; the sequence is MAWAPLLLTLLAHCTGSWA. The tract at residues 20–44 is framework-1; sequence NFMLTQPHSVSESPGKTVTISCTGS. An Ig-like domain is found at 20–117; that stretch reads NFMLTQPHSV…YYCQSYDSSN (98 aa). Cysteines 41 and 110 form a disulfide. Positions 45–52 are complementarity-determining-1; the sequence is SGSIASNY. The interval 53 to 69 is framework-2; the sequence is VQWYQQRPGSAPTTVIY. The segment at 65-97 is disordered; sequence TTVIYEDNQRPSGVPDRFSGSIDSSSNSASLTI. A complementarity-determining-2 region spans residues 70 to 72; that stretch reads EDN. The segment at 73-110 is framework-3; it reads QRPSGVPDRFSGSIDSSSNSASLTISGLKTEDEADYYC. Low complexity predominate over residues 83–97; that stretch reads SGSIDSSSNSASLTI. Positions 111-117 are complementarity-determining-3; it reads QSYDSSN.

As to quaternary structure, immunoglobulins are composed of two identical heavy chains and two identical light chains; disulfide-linked.

It is found in the secreted. It localises to the cell membrane. V region of the variable domain of immunoglobulin light chains that participates in the antigen recognition. Immunoglobulins, also known as antibodies, are membrane-bound or secreted glycoproteins produced by B lymphocytes. In the recognition phase of humoral immunity, the membrane-bound immunoglobulins serve as receptors which, upon binding of a specific antigen, trigger the clonal expansion and differentiation of B lymphocytes into immunoglobulins-secreting plasma cells. Secreted immunoglobulins mediate the effector phase of humoral immunity, which results in the elimination of bound antigens. The antigen binding site is formed by the variable domain of one heavy chain, together with that of its associated light chain. Thus, each immunoglobulin has two antigen binding sites with remarkable affinity for a particular antigen. The variable domains are assembled by a process called V-(D)-J rearrangement and can then be subjected to somatic hypermutations which, after exposure to antigen and selection, allow affinity maturation for a particular antigen. In Homo sapiens (Human), this protein is Immunoglobulin lambda variable 6-57.